Consider the following 201-residue polypeptide: Recombination protein RecR (201 aa).

The C4-type zinc-finger motif lies at Cys60–Cys75. One can recognise a Toprim domain in the interval Ser83–Pro178.

This sequence belongs to the RecR family.

Functionally, may play a role in DNA repair. It seems to be involved in an RecBC-independent recombinational process of DNA repair. It may act with RecF and RecO. The chain is Recombination protein RecR from Nitrobacter winogradskyi (strain ATCC 25391 / DSM 10237 / CIP 104748 / NCIMB 11846 / Nb-255).